The chain runs to 338 residues: Protein mono-ADP-ribosyltransferase PARP11 (338 aa).

An ADP-ribosyl glutamic acid modification is found at glutamate 13. N6-(ADP-ribosyl)lysine is present on lysine 18. The WWE domain occupies 22 to 106 (NEVDDMDTSD…TTGKQRLIKR (85 aa)). Cysteine 56 and cysteine 72 each carry ADP-ribosylcysteine. At aspartate 87 the chain carries ADP-ribosyl aspartic acid. The PARP catalytic domain maps to 123-338 (IPMPPHWENV…IYPEYLIDFH (216 aa)).

This sequence belongs to the ARTD/PARP family. In terms of assembly, interacts with PARP12; this interaction plays a role in zika virus suppression. Auto-mono-ADP-ribosylated.

It is found in the nucleus. Its subcellular location is the nuclear pore complex. The enzyme catalyses L-aspartyl-[protein] + NAD(+) = 4-O-(ADP-D-ribosyl)-L-aspartyl-[protein] + nicotinamide. It carries out the reaction L-cysteinyl-[protein] + NAD(+) = S-(ADP-D-ribosyl)-L-cysteinyl-[protein] + nicotinamide + H(+). The catalysed reaction is L-glutamyl-[protein] + NAD(+) = 5-O-(ADP-D-ribosyl)-L-glutamyl-[protein] + nicotinamide. It catalyses the reaction L-lysyl-[protein] + NAD(+) = N(6)-(ADP-D-ribosyl)-L-lysyl-[protein] + nicotinamide + H(+). Mono-ADP-ribosyltransferase that mediates mono-ADP-ribosylation of target proteins. Plays a role in nuclear envelope stability and nuclear remodeling during spermiogenesis. Inhibits the type I interferon activated signaling pathway. Mechanistically, mono-ADP-ribosylates beta-TrCP/BTRC to promote IFNAR1 ubiquitination and protect BTRC from ubiquitin-proteasome degradation. Additionally, acts as an antiviral factor by cooperating with PARP12 to suppress Zika virus replication, independent of IFNAR1 regulation or intrinsic PARP enzymatic activity. Instead, facilitates the degradation of viral NS1 and NS3 proteins, potentially disrupting viral replication. In Homo sapiens (Human), this protein is Protein mono-ADP-ribosyltransferase PARP11.